Reading from the N-terminus, the 202-residue chain is MSCVPWKGDKAKAESSDLPQAAPPQIYHEKQRRELCALHALNNVFQDSNAFTRETLQEIFQRLSPNTMVTPHKKSMLGNGNYDVNVIMAALQTKGYEAVWWDKRRDVGVIALTNVMGFIMNLPSSLCWGPLKLPLKRQHWICVREVGGAYYNLDSKLKMPEWIGGESELRKFLKYHLRGKNCELLLVVPEEVEAHQSWRADV.

Residues 1-22 (MSCVPWKGDKAKAESSDLPQAA) form a disordered region. Ser15 carries the phosphoserine modification. Residues 23–202 (PPQIYHEKQR…EAHQSWRADV (180 aa)) form the Josephin domain. The active-site Nucleophile is the Cys36. His139 serves as the catalytic Proton acceptor.

Interacts with beta-actin/ACTB. Post-translationally, monoubiquitinated. Ubiquitination activates deubiquitination activity in vitro. As to expression, widely expressed (at protein level).

Its subcellular location is the cell membrane. It localises to the cytoplasm. The catalysed reaction is Thiol-dependent hydrolysis of ester, thioester, amide, peptide and isopeptide bonds formed by the C-terminal Gly of ubiquitin (a 76-residue protein attached to proteins as an intracellular targeting signal).. Deubiquitinates monoubiquitinated probes (in vitro). When ubiquitinated, cleaves 'Lys-63'-linked and 'Lys-48'-linked poly-ubiquitin chains (in vitro), hence may act as a deubiquitinating enzyme. May increase macropinocytosis and suppress clathrin- and caveolae-mediated endocytosis. May enhance membrane dynamics and cell motility independently of its catalytic activity. The protein is Josephin-1 (Josd1) of Mus musculus (Mouse).